The following is a 61-amino-acid chain: Peroxidase 1 (61 aa).

Residues 1-32 (DNTAKEKDSPANLSLRTCAAGDNAEQPLDPSR) form a disordered region. Asn-12 carries N-linked (GlcNAc...) asparagine glycosylation. 3 residues coordinate Ca(2+): Asp-29, Ser-31, and Asp-36.

It belongs to the peroxidase family. Classical plant (class III) peroxidase subfamily. The cofactor is Ca(2+). Heme b is required as a cofactor.

It is found in the secreted. It carries out the reaction 2 a phenolic donor + H2O2 = 2 a phenolic radical donor + 2 H2O. Functionally, removal of H(2)O(2), oxidation of toxic reductants, biosynthesis and degradation of lignin, suberization, auxin catabolism, response to environmental stresses such as wounding, pathogen attack and oxidative stress. These functions might be dependent on each isozyme/isoform in each plant tissue. The protein is Peroxidase 1 of Vitis rotundifolia (Muscadine grape).